Here is a 432-residue protein sequence, read N- to C-terminus: MVILSLYLAAFTLRLLLAGLAHKHCRDAPDGAACHYFTSAERSEWRTEDPQFLAEVLFAVTSMLSFTRLASILPAHESLGTLQISMGRMIDDMIRFMFILMIILTAFLCGLNNIYVPYQETERLGNFNETFQFLFWTMFGMEEHSVVDMPQFLVPEFVGRALYGIFTIVMVIVLLNMLIAMITNSFQKIEDAADVEWKFARSKLYLSYFREGLTLPVPFNILPSPKAIFYLLRRVFRFICCCHFCCKTKKPDYPPIPTFANPGAGAGPGEGERGSYRLRVIKALVQRYIETAQREFEETRRKDLGNRLTELTKTVSRLQSEVAGVQRAVVEAGPRRPPGGASVLSRYITRVRNSFQNLGPPIPETPELTVPATVGTQESSEIGLPDAGGAQAPASGESGPSSPAHVLVHREQESEGAGDLPQEADLGAKEGT.

4 helical membrane passes run 1-21, 52-72, 96-116, and 162-182; these read MVIL…AGLA, FLAE…LASI, FMFI…NIYV, and LYGI…IAMI. The interval 356-432 is disordered; that stretch reads QNLGPPIPET…EADLGAKEGT (77 aa). Over residues 387–404 the composition is skewed to low complexity; that stretch reads AGGAQAPASGESGPSSPA.

The protein belongs to the transient receptor (TC 1.A.4) family. STrpC subfamily. TRPC2 sub-subfamily.

The protein resides in the membrane. Thought to form a receptor-activated calcium permeant cation channel. The polypeptide is Short transient receptor potential channel 2 homolog (TRPC2) (Bos taurus (Bovine)).